A 77-amino-acid chain; its full sequence is Acyl carrier protein (77 aa).

The region spanning 1–76 is the Carrier domain; the sequence is MSIEERVKKI…SAIDYVAKAN (76 aa). O-(pantetheine 4'-phosphoryl)serine is present on Ser36.

It belongs to the acyl carrier protein (ACP) family. In terms of processing, 4'-phosphopantetheine is transferred from CoA to a specific serine of apo-ACP by AcpS. This modification is essential for activity because fatty acids are bound in thioester linkage to the sulfhydryl of the prosthetic group.

The protein resides in the cytoplasm. Its pathway is lipid metabolism; fatty acid biosynthesis. Carrier of the growing fatty acid chain in fatty acid biosynthesis. The protein is Acyl carrier protein of Haemophilus ducreyi (strain 35000HP / ATCC 700724).